The chain runs to 607 residues: Thymidine kinase (607 aa).

2 disordered regions span residues 1-160 (MAGF…ADST) and 180-215 (DDKS…PSGL). Over residues 17 to 32 (KCQEDESPENERHENF) the composition is skewed to basic and acidic residues. 3 stretches are compositionally biased toward polar residues: residues 88-106 (AAVT…TSCP), 148-160 (RKTS…ADST), and 194-203 (RRPSSHSALK). Residue 291–298 (GAPGVGKT) participates in ATP binding. Glu-317 serves as the catalytic Proton acceptor. A substrate-binding site is contributed by Gln-355. Residue Arg-445 participates in ATP binding. A substrate-binding site is contributed by Arg-451.

This sequence belongs to the herpesviridae thymidine kinase family. In terms of assembly, homodimer.

The protein localises to the virion tegument. The protein resides in the host nucleus. It catalyses the reaction thymidine + ATP = dTMP + ADP + H(+). Its function is as follows. Catalyzes the transfer of the gamma-phospho group of ATP to thymidine to generate dTMP in the salvage pathway of pyrimidine synthesis. The dTMP serves as a substrate for DNA polymerase during viral DNA replication. Allows the virus to be reactivated and to grow in non-proliferative cells lacking a high concentration of phosphorylated nucleic acid precursors. The protein is Thymidine kinase of Epstein-Barr virus (strain AG876) (HHV-4).